A 199-amino-acid polypeptide reads, in one-letter code: Guanylate kinase (199 aa).

In terms of domain architecture, Guanylate kinase-like spans 20–198 (GKLIVLTGPS…ALQAIEVALF (179 aa)). 27-34 (GPSGVGKG) is a binding site for ATP.

Belongs to the guanylate kinase family.

Its subcellular location is the cytoplasm. It carries out the reaction GMP + ATP = GDP + ADP. Functionally, essential for recycling GMP and indirectly, cGMP. In Trichormus variabilis (strain ATCC 29413 / PCC 7937) (Anabaena variabilis), this protein is Guanylate kinase.